Reading from the N-terminus, the 273-residue chain is Putative phosphoenolpyruvate synthase regulatory protein (273 aa).

G153 to T160 contributes to the ADP binding site.

It belongs to the pyruvate, phosphate/water dikinase regulatory protein family. PSRP subfamily.

The enzyme catalyses [pyruvate, water dikinase] + ADP = [pyruvate, water dikinase]-phosphate + AMP + H(+). It catalyses the reaction [pyruvate, water dikinase]-phosphate + phosphate + H(+) = [pyruvate, water dikinase] + diphosphate. In terms of biological role, bifunctional serine/threonine kinase and phosphorylase involved in the regulation of the phosphoenolpyruvate synthase (PEPS) by catalyzing its phosphorylation/dephosphorylation. The sequence is that of Putative phosphoenolpyruvate synthase regulatory protein from Pectobacterium atrosepticum (strain SCRI 1043 / ATCC BAA-672) (Erwinia carotovora subsp. atroseptica).